Here is a 95-residue protein sequence, read N- to C-terminus: MLKSNNASKTATCKVGDKAAKKVFFRRRKGCPLSVPNAPVIDYKNPELLIKFVSEGGRMLPSRITNVCAKKQRKLNNAIKIARILALLPFVFQAK.

This sequence belongs to the bacterial ribosomal protein bS18 family. As to quaternary structure, part of the 30S ribosomal subunit. Forms a tight heterodimer with protein bS6.

In terms of biological role, binds as a heterodimer with protein bS6 to the central domain of the 16S rRNA, where it helps stabilize the platform of the 30S subunit. This is Small ribosomal subunit protein bS18 from Rickettsia typhi (strain ATCC VR-144 / Wilmington).